The sequence spans 574 residues: Meiotically up-regulated gene 72 protein (574 aa).

The segment at 339 to 374 is disordered; that stretch reads VRAGTPQSSPNFNPAMRRSPVGAASRSPSRSTIGIS. T343 is modified (phosphothreonine). Positions 364–374 are enriched in polar residues; sequence RSPSRSTIGIS. S392 is modified (phosphoserine). Disordered stretches follow at residues 422–451 and 495–574; these read TSPSGLNPTGRPSRFGGRVRGNPLTMNKAG and RNRR…RRMD. The span at 541 to 554 shows a compositional bias: polar residues; that stretch reads LYDTSRYPTRNSKP.

Its subcellular location is the cytoplasm. In terms of biological role, has a role in meiosis. The polypeptide is Meiotically up-regulated gene 72 protein (mug72) (Schizosaccharomyces pombe (strain 972 / ATCC 24843) (Fission yeast)).